Reading from the N-terminus, the 312-residue chain is Ribosomal protein L11 methyltransferase (312 aa).

S-adenosyl-L-methionine is bound by residues threonine 162, glycine 183, aspartate 205, and asparagine 248.

It belongs to the methyltransferase superfamily. PrmA family.

Its subcellular location is the cytoplasm. It carries out the reaction L-lysyl-[protein] + 3 S-adenosyl-L-methionine = N(6),N(6),N(6)-trimethyl-L-lysyl-[protein] + 3 S-adenosyl-L-homocysteine + 3 H(+). Its function is as follows. Methylates ribosomal protein L11. The chain is Ribosomal protein L11 methyltransferase from Geobacillus thermodenitrificans (strain NG80-2).